The chain runs to 201 residues: Protein LIGHT-DEPENDENT SHORT HYPOCOTYLS 2 (201 aa).

Positions 1–14 (MDLISQNHNNRNPN) are enriched in polar residues. Disordered regions lie at residues 1–37 (MDLI…YENQ) and 151–201 (SRGV…GATQ). Over residues 15 to 32 (TSLSTQTPSSFSSPPSSS) the composition is skewed to low complexity. One can recognise an ALOG domain in the interval 33–160 (RYENQKRRDW…SRGVSYEKKR (128 aa)). The Nuclear localization signal motif lies at 158-162 (KKRKR).

This sequence belongs to the plant homeotic and developmental regulators ALOG protein family.

The protein resides in the nucleus. In terms of biological role, probable transcription regulator that acts as a developmental regulator by promoting cell growth in response to light. The polypeptide is Protein LIGHT-DEPENDENT SHORT HYPOCOTYLS 2 (LSH2) (Arabidopsis thaliana (Mouse-ear cress)).